A 75-amino-acid polypeptide reads, in one-letter code: MSTTEQTVCEIEQESELIPAKPQYIIVKKPKRQAWQRVLLLFRIINMIVIWAALIALFVKLYILRGPIPRSYFHY.

The chain crosses the membrane as a helical span at residues 44-64 (IINMIVIWAALIALFVKLYIL).

Its subcellular location is the host membrane. This is an uncharacterized protein from Ostreid herpesvirus 1 (isolate France) (OsHV-1).